The sequence spans 317 residues: (2S)-3-sulfopropanediol dehydratase activating enzyme (317 aa).

The region spanning 18–306 (HDGPGLRTEL…QMLAEYFNQR (289 aa)) is the Radical SAM core domain. [4Fe-4S] cluster is bound by residues Cys32, Cys36, Cys39, Cys58, Cys64, Cys67, Cys71, Cys92, Cys95, Cys98, and Cys102. Residue 38–40 (WCS) coordinates S-adenosyl-L-methionine. 4Fe-4S ferredoxin-type domains are found at residues 49-82 (AQVG…FTRG) and 83-112 (KLTS…LWGK). Residues Gly142 and 191–193 (DIK) each bind S-adenosyl-L-methionine.

The protein belongs to the organic radical-activating enzymes family. Requires [4Fe-4S] cluster as cofactor.

It catalyses the reaction glycyl-[protein] + reduced [flavodoxin] + S-adenosyl-L-methionine = glycin-2-yl radical-[protein] + semiquinone [flavodoxin] + 5'-deoxyadenosine + L-methionine + H(+). The protein operates within organosulfur degradation; alkanesulfonate degradation. Its function is as follows. Involved in the degradation of the organosulfur compound 2(S)-dihydroxypropanesulfonate (DHPS). Catalyzes activation of the (2S)-3-sulfopropanediol dehydratase HpfG under anaerobic conditions by generation of an organic free radical on a glycine residue. The sequence is that of (2S)-3-sulfopropanediol dehydratase activating enzyme from Klebsiella oxytoca.